A 98-amino-acid chain; its full sequence is Keratin-associated protein 3-1 (98 aa).

A2 is subject to N-acetylalanine. A run of 4 repeats spans residues 3 to 7 (CCAPR), 8 to 12 (CCSVR), 47 to 51 (FCDNS), and 55 to 59 (YHVPD). Residues 3 to 59 (CCAPRCCSVRTGPATTICSSDQFCRCGVCLPSTCPHDISLLQPTFCDNSPVPYHVPD) are 4 X 5 AA repeats of C-C-X(3).

The protein belongs to the KRTAP type 3 family. As to quaternary structure, interacts with wool keratins. Wool.

Functionally, in the wool cortex, wool keratin intermediate filaments are embedded in an interfilamentous matrix, consisting of hair keratin-associated proteins (KRTAP), which are essential for the formation of a rigid and resistant wool shaft through their extensive disulfide bond cross-linking with abundant cysteine residues of wool keratins. The matrix proteins include the high-sulfur and high-glycine-tyrosine keratins. This Capra hircus (Goat) protein is Keratin-associated protein 3-1 (KRTAP3-1).